We begin with the raw amino-acid sequence, 155 residues long: Probable calcium-binding protein CML44 (155 aa).

EF-hand domains lie at I6–A41, D85–E120, and R130–V155. Ca(2+) is bound by residues D19, N21, D23, E30, D98, N100, D102, Y104, and E109.

Its function is as follows. Potential calcium sensor. This chain is Probable calcium-binding protein CML44 (CML44), found in Arabidopsis thaliana (Mouse-ear cress).